Reading from the N-terminus, the 155-residue chain is Putative pre-16S rRNA nuclease (155 aa).

The protein belongs to the YqgF nuclease family.

The protein localises to the cytoplasm. In terms of biological role, could be a nuclease involved in processing of the 5'-end of pre-16S rRNA. This chain is Putative pre-16S rRNA nuclease, found in Wolbachia sp. subsp. Brugia malayi (strain TRS).